Consider the following 1377-residue polypeptide: MNFRYQPNQQPYQPPQHNNNSNNRGIPTNYQQYPPQNYQQYPPQQYYQAPINPQQFYPGPPQQPNFVSQQTGPIPQQPPGFNNQSPIPQQQPQQPQQPQPSQPSPIPQQPLSPQSSSPSSPQHVVIQPNQPNQQQQNANRKQSALKPSVQHNTIPNIPRTHSAPPSLEEQQQQHQHQNNIKGFTPEKRTPIQHSPQYVIPPQQFGKPIYPNPQQMYFQQQPPYPYYGQPPVVPVVNQMIPQTTVKKTLEIIDPKTNEKVIITSPPKSSTNSTVLPTSNTSSSSSSPTNANGSSTPSGSGYVTSFSSGNVNLRKNKQSGETTPIKQDAASTTTSTPATPSSKAESTTEAETTSKPSTPTTVDSVSSTTTPDKSNVVTAAATTTAAATTTTTTTDTTTTTTTPEAETSTTTPATEVQSPVETTKEEQPKEEVKPTEVQPPVEPTKEEPIKEEPTNEEPTKEEPAKVEPIKEEPSVVESTTTDTKEEPIIVAEEKKQEETPVTPVTEKKEEPIVKPETPVTDSTAASTTVEKESTDSTTTATVSTTAAATTTNGKVEEELEEWEKKGEEDFNIVQSSDSSTSITPATSLVFRNSGEKIVYSKELMMSLKPKSMEEPTGPLKDLKNQIETNTNQNQLNRSGNKIGGNQQNKNMGMGGMNMNPNYPPQMNMKYPPQMNMKYPPKNYNNQVQGQQQQQQGNPNFNKYAPGYQYQQQIQQGMPPPTLQPNPYQPQQATYGITFSRDPVQPSISSQPVNEKRWVPTKVNALDDSQKVLRKANFILNKITPEKFDVLTEELLELGIVDDEKVHKGTIDLIFDKALNESKFCTMYTNLCKKIFEFEKVKKEIAKRAVFEKIGVIETENYHKMSNKQRDEFDQEHNVKAVFRTLLLSTCQKEYEKIPFETVDKVPEDLKPEEKTDFEEGQFKERKRIFGLIKFIGELFKQQMLSEKIVHGIMVSLIGELQRPSEIKLECFCKLLSIVGKTLSQNEQASKYLTSYFQRMQQLVDNSQTLSQRIRFLIQNVMDLKNSNWTLKVDESAKTLKEVEATQNKQEDNRKSNPTGVKNTSNVKNMFNASFNFGGPNVKPMMAPPMNYNKNAPGIKPPAQFQPKPYPYNNNYNNQQQQQQHFGGGNNMMNNNNNNYNRGPMGNMNNNMNNNMNNNNMNNMNSNNSTSNNSANSEIQKKWDAVSTSITDSINEFLELKDEEEFMECVKSYVPSTDLYPHVISQLISTACSKQKDEPLIKKLIFASVFDKKLFTTAQFKSGYELFISSLPDLFEDRPSAFKSVASVFYSFVLNQEGLITITQFANAFTKVLDDCGSSIPKILFEFILQFEDPKKAAQLFVDNKVGVQGFFTEKDFSKITQTAISYNKDLQPFFDIVKL.

Composition is skewed to low complexity over residues 1-57 (MNFR…QQFY) and 84-94 (QSPIPQQQPQQ). 4 disordered regions span residues 1-189 (MNFR…EKRT), 259-563 (VIIT…WEKK), 683-702 (NQVQ…NKYA), and 1041-1063 (EATQ…NTSN). Pro residues predominate over residues 95 to 110 (PQQPQPSQPSPIPQQP). Low complexity-rich tracts occupy residues 111-137 (LSPQ…QQQN), 168-179 (EEQQQQHQHQNN), and 267-296 (SSTN…STPS). A compositionally biased stretch (polar residues) spans 297-323 (GSGYVTSFSSGNVNLRKNKQSGETTPI). Positions 326–412 (DAASTTTSTP…AETSTTTPAT (87 aa)) are enriched in low complexity. Composition is skewed to basic and acidic residues over residues 420–432 (TTKE…EVKP), 441–471 (PTKE…KEEP), and 480–496 (DTKE…KQEE). Residues 517–526 (VTDSTAASTT) show a composition bias toward polar residues. Over residues 533–549 (DSTTTATVSTTAAATTT) the composition is skewed to low complexity. A compositionally biased stretch (basic and acidic residues) spans 1041-1052 (EATQNKQEDNRK). The segment covering 1053-1063 (SNPTGVKNTSN) has biased composition (polar residues). The MI domain occupies 1182-1305 (AVSTSITDSI…LITITQFANA (124 aa)).

Belongs to the eukaryotic initiation factor 4G family.

Its function is as follows. Probable component of the protein complex eIF4F, which is involved in the recognition of the mRNA cap, ATP-dependent unwinding of 5'-terminal secondary structure and recruitment of mRNA to the ribosome. This Dictyostelium discoideum (Social amoeba) protein is Eukaryotic translation initiation factor 4 gamma (eif4g).